Here is a 461-residue protein sequence, read N- to C-terminus: Argininosuccinate lyase (461 aa).

Belongs to the lyase 1 family. Argininosuccinate lyase subfamily.

The protein localises to the cytoplasm. It catalyses the reaction 2-(N(omega)-L-arginino)succinate = fumarate + L-arginine. The protein operates within amino-acid biosynthesis; L-arginine biosynthesis; L-arginine from L-ornithine and carbamoyl phosphate: step 3/3. This chain is Argininosuccinate lyase, found in Clostridium beijerinckii (strain ATCC 51743 / NCIMB 8052) (Clostridium acetobutylicum).